The sequence spans 760 residues: GLC7-interacting protein 4 (760 aa).

Disordered stretches follow at residues 449 to 573 (KKKP…SLQS) and 593 to 626 (KSAS…SSST). Low complexity-rich tracts occupy residues 454–474 (ITKL…ASPS) and 494–506 (SSRS…VRTT). S497 and S501 each carry phosphoserine. The span at 512–525 (AETKKSVVSPEKRK) shows a compositional bias: basic and acidic residues. Residues 534–554 (SSSLQSYTNKQQTSYLNSTRH) show a composition bias toward polar residues. Composition is skewed to low complexity over residues 561–573 (SKLN…SLQS) and 594–626 (SAST…SSST). S609 carries the phosphoserine modification.

This sequence belongs to the GIP4 family. Interacts with GLC7.

Its subcellular location is the cytoplasm. In terms of biological role, GLC7 phosphatase-regulatory protein involved in GLC7 subcellular redistribution and chromosome segregation. The sequence is that of GLC7-interacting protein 4 (GIP4) from Saccharomyces cerevisiae (strain ATCC 204508 / S288c) (Baker's yeast).